A 200-amino-acid polypeptide reads, in one-letter code: dITP/XTP pyrophosphatase (200 aa).

8 to 13 (THNPNK) provides a ligand contact to substrate. Mg(2+)-binding residues include glutamate 41 and aspartate 71. Aspartate 71 acts as the Proton acceptor in catalysis. Substrate-binding positions include threonine 72, 153–156 (FGYD), lysine 176, and 181–182 (HR).

This sequence belongs to the HAM1 NTPase family. Homodimer. Requires Mg(2+) as cofactor.

The enzyme catalyses XTP + H2O = XMP + diphosphate + H(+). It carries out the reaction dITP + H2O = dIMP + diphosphate + H(+). It catalyses the reaction ITP + H2O = IMP + diphosphate + H(+). In terms of biological role, pyrophosphatase that catalyzes the hydrolysis of nucleoside triphosphates to their monophosphate derivatives, with a high preference for the non-canonical purine nucleotides XTP (xanthosine triphosphate), dITP (deoxyinosine triphosphate) and ITP. Seems to function as a house-cleaning enzyme that removes non-canonical purine nucleotides from the nucleotide pool, thus preventing their incorporation into DNA/RNA and avoiding chromosomal lesions. The chain is dITP/XTP pyrophosphatase from Caldanaerobacter subterraneus subsp. tengcongensis (strain DSM 15242 / JCM 11007 / NBRC 100824 / MB4) (Thermoanaerobacter tengcongensis).